The sequence spans 25 residues: Ocellatin-K1 (25 aa).

Ile-25 is subject to Isoleucine amide.

As to expression, expressed by the skin glands.

The protein resides in the secreted. Its function is as follows. Has hemolytic and antibacterial activity. This is Ocellatin-K1 from Leptodactylus knudseni (Knudsen's thin-toed frog).